Here is a 943-residue protein sequence, read N- to C-terminus: Mechanosensitive ion channel protein BA (943 aa).

Residues 1–67 (MPNPNDVTID…PPSSSLGFGH (67 aa)) are disordered. Residues 1 to 107 (MPNPNDVTID…AVLNFSTVTR (107 aa)) are Cytoplasmic-facing. A compositionally biased stretch (polar residues) spans 14-37 (TSVSSRGQTGARNNSTNIPNSPSG). The helical transmembrane segment at 108–130 (YLIYIAPLAALLAIPIIVGATAA) threads the bilayer. The Lumenal portion of the chain corresponds to 131 to 149 (EDAKIGGVSLPWFFCWVEV). Residues 150 to 175 (VWVSLWVCKLVAKVIPFVFQFVCGIV) form a helical membrane-spanning segment. At 176 to 195 (SAGTRKYALILRNLEIPITM) the chain is on the cytoplasmic side. The chain crosses the membrane as a helical span at residues 196 to 214 (VLWMIVSLVTFLPIMVYNP). Residues 215–233 (RNKREGDTETKSWEKSVKN) lie on the Lumenal side of the membrane. The chain crosses the membrane as a helical span at residues 234 to 259 (VLFAFLVCALIFLGEKTLVQLISISY). Residues 260–468 (HRKQFDARIK…DQAIHVLDNL (209 aa)) lie on the Cytoplasmic side of the membrane. The region spanning 412-447 (GKEAEAEECFTMLDRDGNGDISLDEIILAISEIGRT) is the EF-hand domain. 5 residues coordinate Ca(2+): Asp425, Asp427, Asn429, Asp431, and Glu436. The chain crosses the membrane as a helical span at residues 469–489 (LATIAFIIAVLVFVSFVTSGF). The Lumenal portion of the chain corresponds to 490–502 (GTVIAAGATSLLS). The chain crosses the membrane as a helical span at residues 503–523 (LSFVFATTAQEVLGSCIFLFV). The Cytoplasmic portion of the chain corresponds to 524 to 943 (KHPFDIGDRV…QRRNYESRRL (420 aa)). The tract at residues 677–943 (PGAAAEDAAA…QRRNYESRRL (267 aa)) is disordered. Composition is skewed to low complexity over residues 678–687 (GAAAEDAAAA) and 744–759 (GASA…AGSA). The segment covering 760 to 781 (YSETTLNNTVSEPYQRSFTPNT) has biased composition (polar residues). Over residues 798-810 (TERHLGVSHDSIA) the composition is skewed to basic and acidic residues. Polar residues predominate over residues 827–842 (TTANQSLASPTTMQSE). Positions 857–880 (PSSSQYSQQYPQQQSQSPYSYTYS) are enriched in low complexity. A compositionally biased stretch (polar residues) spans 886-904 (PESSLQPLEHTTSYNQSLP). Positions 916–943 (NSLEGHSPHVDPRHMTEEQRRNYESRRL) are enriched in basic and acidic residues.

Belongs to the MscS (TC 1.A.23) family.

It is found in the cell membrane. The enzyme catalyses Ca(2+)(in) = Ca(2+)(out). In terms of biological role, acts as a mechanosensitive calcium channel in response to membrane stretch. Regulates intracellular calcium levels and cell volume for survival in response to hypo-osmotic shock. Involved in maintaining vacuole integrity and protecting the nuclear envelope upon hypo-osmotic shock. seems to contribute to CaCl2 toxicityIn contracstz to mscA, mscB seems to contribute to CaCl(2) toxicity. This is Mechanosensitive ion channel protein BA from Emericella nidulans (strain FGSC A4 / ATCC 38163 / CBS 112.46 / NRRL 194 / M139) (Aspergillus nidulans).